Reading from the N-terminus, the 999-residue chain is Helicase required for RNAi-mediated heterochromatin assembly 1 (999 aa).

Positions 61–90 (EQIETSETSKTQDSEGNKVDKNLKENKSIR) are disordered. Positions 70-88 (KTQDSEGNKVDKNLKENKS) are enriched in basic and acidic residues. Residue serine 94 is modified to Phosphoserine. Basic and acidic residues predominate over residues 106-124 (RNDITSGKNREFENEHHPA). Residues 106–131 (RNDITSGKNREFENEHHPASDTSSWR) form a disordered region. 393–400 (GPPGTGKS) is a binding site for ATP.

In terms of assembly, cid12, hrr1 and rdp1 interact forming the RNA-directed RNA polymerase complex (RDRC). The RDRC complex interacts with the RITS complex via interaction between ago1 and hrr1. Clr4 has a role in mediating this interaction.

The protein resides in the cytoplasm. Its subcellular location is the nucleus. The catalysed reaction is ATP + H2O = ADP + phosphate + H(+). Functionally, has a role in the RNA interference (RNAi) pathway which is important for heterochromatin formation and accurate chromosome segregation. A member of the RNA-directed RNA polymerase complex (RDRC) which is involved in the generation of small interfering RNAs (siRNAs) and mediate their association with the RNA-induced transcriptional silencing (RITS) complex. RITS acts as a priming complex for dsRNA synthesis at the site of non-coding centromeric RNA. In Schizosaccharomyces pombe (strain 972 / ATCC 24843) (Fission yeast), this protein is Helicase required for RNAi-mediated heterochromatin assembly 1 (hrr1).